The primary structure comprises 67 residues: Protein C' (67 aa).

This sequence belongs to the rhabdoviruses C protein family.

In terms of biological role, seems to stimulates transcription by the viral polymerase. May play a role in viral pathogenesis or transmission by insects vectors. In Aedes (Bovine), this protein is Protein C' (P).